Consider the following 188-residue polypeptide: Crossover junction endodeoxyribonuclease RuvC (188 aa).

Catalysis depends on residues Asp-7, Glu-68, and Asp-141. 3 residues coordinate Mg(2+): Asp-7, Glu-68, and Asp-141.

This sequence belongs to the RuvC family. In terms of assembly, homodimer which binds Holliday junction (HJ) DNA. The HJ becomes 2-fold symmetrical on binding to RuvC with unstacked arms; it has a different conformation from HJ DNA in complex with RuvA. In the full resolvosome a probable DNA-RuvA(4)-RuvB(12)-RuvC(2) complex forms which resolves the HJ. Requires Mg(2+) as cofactor.

Its subcellular location is the cytoplasm. It catalyses the reaction Endonucleolytic cleavage at a junction such as a reciprocal single-stranded crossover between two homologous DNA duplexes (Holliday junction).. Functionally, the RuvA-RuvB-RuvC complex processes Holliday junction (HJ) DNA during genetic recombination and DNA repair. Endonuclease that resolves HJ intermediates. Cleaves cruciform DNA by making single-stranded nicks across the HJ at symmetrical positions within the homologous arms, yielding a 5'-phosphate and a 3'-hydroxyl group; requires a central core of homology in the junction. The consensus cleavage sequence is 5'-(A/T)TT(C/G)-3'. Cleavage occurs on the 3'-side of the TT dinucleotide at the point of strand exchange. HJ branch migration catalyzed by RuvA-RuvB allows RuvC to scan DNA until it finds its consensus sequence, where it cleaves and resolves the cruciform DNA. This chain is Crossover junction endodeoxyribonuclease RuvC, found in Mycobacterium tuberculosis (strain ATCC 25177 / H37Ra).